We begin with the raw amino-acid sequence, 476 residues long: Bifunctional protein HldE (476 aa).

Residues Met-1–Ser-319 form a ribokinase region. Asn-195–Glu-198 is a binding site for ATP. Asp-264 is a catalytic residue. The interval Met-345–Gln-476 is cytidylyltransferase.

It in the N-terminal section; belongs to the carbohydrate kinase PfkB family. The protein in the C-terminal section; belongs to the cytidylyltransferase family. Homodimer.

It catalyses the reaction D-glycero-beta-D-manno-heptose 7-phosphate + ATP = D-glycero-beta-D-manno-heptose 1,7-bisphosphate + ADP + H(+). The catalysed reaction is D-glycero-beta-D-manno-heptose 1-phosphate + ATP + H(+) = ADP-D-glycero-beta-D-manno-heptose + diphosphate. The protein operates within nucleotide-sugar biosynthesis; ADP-L-glycero-beta-D-manno-heptose biosynthesis; ADP-L-glycero-beta-D-manno-heptose from D-glycero-beta-D-manno-heptose 7-phosphate: step 1/4. Its pathway is nucleotide-sugar biosynthesis; ADP-L-glycero-beta-D-manno-heptose biosynthesis; ADP-L-glycero-beta-D-manno-heptose from D-glycero-beta-D-manno-heptose 7-phosphate: step 3/4. Catalyzes the phosphorylation of D-glycero-D-manno-heptose 7-phosphate at the C-1 position to selectively form D-glycero-beta-D-manno-heptose-1,7-bisphosphate. Functionally, catalyzes the ADP transfer from ATP to D-glycero-beta-D-manno-heptose 1-phosphate, yielding ADP-D-glycero-beta-D-manno-heptose. The chain is Bifunctional protein HldE from Shewanella putrefaciens (strain CN-32 / ATCC BAA-453).